We begin with the raw amino-acid sequence, 211 residues long: Phosphoserine phosphatase 1 (211 aa).

Residue His9 is the Tele-phosphohistidine intermediate of the active site. His150 is a catalytic residue.

Belongs to the histidine phosphatase superfamily. Metal-independent phosphoserine phosphatase family. As to quaternary structure, homodimer. Can also form a heterodimer with PspB.

The catalysed reaction is O-phospho-L-serine + H2O = L-serine + phosphate. It carries out the reaction O-phospho-D-serine + H2O = D-serine + phosphate. The protein operates within amino-acid biosynthesis; L-serine biosynthesis; L-serine from 3-phospho-D-glycerate: step 3/3. Activity is not inhibited by EDTA in vitro, nor enhanced by the addition of Mg(2+). Catalyzes the dephosphorylation of L-phosphoserine to serine and inorganic phosphate. Is poorly or not active toward D-phosphoserine, DL-phosphothreonine, 3-phosphoglycerate, para-nitrophenylphosphate, and fructose-6-phosphate. Does not display phosphoglycerate mutase activity. The sequence is that of Phosphoserine phosphatase 1 (pspA) from Hydrogenobacter thermophilus (strain DSM 6534 / IAM 12695 / TK-6).